A 74-amino-acid chain; its full sequence is Small heat shock protein hspG10 (74 aa).

Residues 31-74 form the sHSP domain; sequence KTIIDILPSMDVTMTNDKLIIETELAGISKDHIEIDIKDSILTI.

Belongs to the small heat shock protein (HSP20) family.

The sequence is that of Small heat shock protein hspG10 (hspG10) from Dictyostelium discoideum (Social amoeba).